Here is a 358-residue protein sequence, read N- to C-terminus: 3-isopropylmalate dehydrogenase (358 aa).

76-89 (GPRWDNLTGAERPE) contributes to the NAD(+) binding site. Substrate contacts are provided by Arg-96, Arg-106, Arg-135, and Asp-225. Asp-225, Asp-249, and Asp-253 together coordinate Mg(2+). An NAD(+)-binding site is contributed by 283-295 (GSAPDIAGQNKAN).

This sequence belongs to the isocitrate and isopropylmalate dehydrogenases family. LeuB type 1 subfamily. Homodimer. Mg(2+) serves as cofactor. It depends on Mn(2+) as a cofactor.

It localises to the cytoplasm. It catalyses the reaction (2R,3S)-3-isopropylmalate + NAD(+) = 4-methyl-2-oxopentanoate + CO2 + NADH. It participates in amino-acid biosynthesis; L-leucine biosynthesis; L-leucine from 3-methyl-2-oxobutanoate: step 3/4. In terms of biological role, catalyzes the oxidation of 3-carboxy-2-hydroxy-4-methylpentanoate (3-isopropylmalate) to 3-carboxy-4-methyl-2-oxopentanoate. The product decarboxylates to 4-methyl-2 oxopentanoate. The protein is 3-isopropylmalate dehydrogenase of Oleidesulfovibrio alaskensis (strain ATCC BAA-1058 / DSM 17464 / G20) (Desulfovibrio alaskensis).